Here is a 232-residue protein sequence, read N- to C-terminus: Ribonuclease 3 (232 aa).

An RNase III domain is found at 6–137; the sequence is QEMLKRDFNI…FIGALYLDQG (132 aa). A Mg(2+)-binding site is contributed by Glu-50. Residue Asp-54 is part of the active site. Residues Asp-123 and Glu-126 each coordinate Mg(2+). The active site involves Glu-126. In terms of domain architecture, DRBM spans 163–232; it reads DNKTELQEVL…AYQALKKLRK (70 aa).

This sequence belongs to the ribonuclease III family. As to quaternary structure, homodimer. Mg(2+) is required as a cofactor.

Its subcellular location is the cytoplasm. It carries out the reaction Endonucleolytic cleavage to 5'-phosphomonoester.. Functionally, digests double-stranded RNA. Involved in the processing of primary rRNA transcript to yield the immediate precursors to the large and small rRNAs (23S and 16S). Processes some mRNAs, and tRNAs when they are encoded in the rRNA operon. Processes pre-crRNA and tracrRNA of type II CRISPR loci if present in the organism. This is Ribonuclease 3 from Ligilactobacillus salivarius (strain UCC118) (Lactobacillus salivarius).